A 104-amino-acid polypeptide reads, in one-letter code: Urease subunit beta (104 aa).

Belongs to the urease beta subunit family. Heterotrimer of UreA (gamma), UreB (beta) and UreC (alpha) subunits. Three heterotrimers associate to form the active enzyme.

The protein localises to the cytoplasm. It carries out the reaction urea + 2 H2O + H(+) = hydrogencarbonate + 2 NH4(+). It functions in the pathway nitrogen metabolism; urea degradation; CO(2) and NH(3) from urea (urease route): step 1/1. The sequence is that of Urease subunit beta from Rhodopseudomonas palustris (strain BisB18).